The following is a 265-amino-acid chain: Mlc titration factor A (265 aa).

The Zn(2+) site is built by His111, His148, His152, and Glu211.

It belongs to the MtfA family. In terms of assembly, interacts with Mlc. It depends on Zn(2+) as a cofactor.

It is found in the cytoplasm. Functionally, involved in the modulation of the activity of the glucose-phosphotransferase system (glucose-PTS). Interacts with the transcriptional repressor Mlc, preventing its interaction with DNA and leading to the modulation of expression of genes regulated by Mlc, including ptsG, which encodes the PTS system glucose-specific EIICB component. In terms of biological role, shows zinc-dependent metallopeptidase activity. This chain is Mlc titration factor A, found in Escherichia fergusonii.